The following is a 123-amino-acid chain: MAKAIYVKFDVPKELADKAAEALEIARETGKVSKGTNEVTKAVERGVAQLVLIAEDVEPAEIVAHLPLLAEEKEIPYIYIPTKDELGAAAGLNVGTASSAIVEAGDAEDLIKEIIEKVEELKK.

Belongs to the eukaryotic ribosomal protein eL8 family. In terms of assembly, part of the 50S ribosomal subunit. Probably part of the RNase P complex.

Its subcellular location is the cytoplasm. Multifunctional RNA-binding protein that recognizes the K-turn motif in ribosomal RNA, the RNA component of RNase P, box H/ACA, box C/D and box C'/D' sRNAs. In Methanothermobacter thermautotrophicus (strain ATCC 29096 / DSM 1053 / JCM 10044 / NBRC 100330 / Delta H) (Methanobacterium thermoautotrophicum), this protein is Large ribosomal subunit protein eL8.